The primary structure comprises 325 residues: MRTEDDSWDVTTSVGSTGLLVAAARALETQKADPLAIDPYAEVFCRAAGGEWADVLDGKLPDHYLTTGDFGEHFVNFQGARTRYFDEYFSRATAAGMKQVVILAAGLDSRAFRLQWPIGTTIFELDRPQVLDFKNAVLADYHIRPRAQRRSVAVDLRDEWQIALCNNGFDANRPSAWIAEGLLVYLSAEAQQRLFIGIDTLASPGSHVAVEEATPLDPCEFAAKLERERAANAQGDPRRFFQMVYNERWARATEWFDERGWRATATPLAEYLRRVGRAVPEADTEAAPMVTAITFVSAVRTGLVADPARTSPSSTSIGFKRFEAD.

S-adenosyl-L-methionine is bound by residues aspartate 126 and 155–156 (DL).

Belongs to the UPF0677 family.

Exhibits S-adenosyl-L-methionine-dependent methyltransferase activity. In Mycobacterium tuberculosis (strain CDC 1551 / Oshkosh), this protein is Putative S-adenosyl-L-methionine-dependent methyltransferase MT0917.